The primary structure comprises 378 residues: Copper-containing nitrite reductase (378 aa).

A signal peptide (tat-type signal) is located at residues 1-38; sequence MTEQLQMTRRTMLAGAALAGAVAPLLHTAQAHAAGAAA. Plastocyanin-like domains lie at 39-213 and 214-378; these read AAGA…YDKI and YYVG…PASM. Cu cation contacts are provided by histidine 133, histidine 138, histidine 173, cysteine 174, histidine 183, methionine 188, and histidine 344.

The protein belongs to the multicopper oxidase family. Homotrimer. The cofactor is Cu(+). It depends on Cu(2+) as a cofactor. Requires FAD as cofactor. Predicted to be exported by the Tat system. The position of the signal peptide cleavage has been experimentally proven.

It is found in the periplasm. It catalyses the reaction nitric oxide + Fe(III)-[cytochrome c] + H2O = Fe(II)-[cytochrome c] + nitrite + 2 H(+). It participates in nitrogen metabolism; nitrate reduction (denitrification); dinitrogen from nitrate: step 2/4. This Achromobacter cycloclastes protein is Copper-containing nitrite reductase (nirK).